The primary structure comprises 35 residues: Pheromone-binding protein 2 (35 aa).

This sequence belongs to the PBP/GOBP family. As to quaternary structure, homodimer. As to expression, antenna.

Its function is as follows. This major soluble protein in olfactory sensilla of male moths might serve to solubilize the extremely hydrophobic pheromone molecules and to transport pheromone through the aqueous lymph to receptors located on olfactory cilia. The protein is Pheromone-binding protein 2 of Lymantria dispar (Gypsy moth).